The following is a 515-amino-acid chain: uncharacterized protein (515 aa).

It belongs to the AllF family.

This is an uncharacterized protein from Escherichia coli (strain K12).